The sequence spans 873 residues: Aminopeptidase M1-D (873 aa).

Positions 96-203 (LGEGVLAMRF…MSTYLVAIVV (108 aa)) are required for membrane association. Substrate-binding positions include Glu-136 and 269 to 273 (GAMEN). His-305 contributes to the Zn(2+) binding site. The Proton acceptor role is filled by Glu-306. Zn(2+)-binding residues include His-309 and Glu-328. Residues 721-722 (LL) carry the Dileucine internalization motif motif.

It belongs to the peptidase M1 family. As to quaternary structure, homodimer. Zn(2+) serves as cofactor.

Its subcellular location is the membrane. It is found in the microsome membrane. The protein resides in the cytoplasm. The enzyme catalyses Release of an N-terminal amino acid, Xaa-|-Yaa- from a peptide, amide or arylamide. Xaa is preferably Ala, but may be most amino acids including Pro (slow action). When a terminal hydrophobic residue is followed by a prolyl residue, the two may be released as an intact Xaa-Pro dipeptide.. The polypeptide is Aminopeptidase M1-D (Oryza sativa subsp. japonica (Rice)).